The sequence spans 97 residues: Aspartyl/glutamyl-tRNA(Asn/Gln) amidotransferase subunit C (97 aa).

The interval leucine 58 to leucine 78 is disordered. Basic and acidic residues predominate over residues leucine 63–alanine 77.

The protein belongs to the GatC family. As to quaternary structure, heterotrimer of A, B and C subunits.

It carries out the reaction L-glutamyl-tRNA(Gln) + L-glutamine + ATP + H2O = L-glutaminyl-tRNA(Gln) + L-glutamate + ADP + phosphate + H(+). It catalyses the reaction L-aspartyl-tRNA(Asn) + L-glutamine + ATP + H2O = L-asparaginyl-tRNA(Asn) + L-glutamate + ADP + phosphate + 2 H(+). Its function is as follows. Allows the formation of correctly charged Asn-tRNA(Asn) or Gln-tRNA(Gln) through the transamidation of misacylated Asp-tRNA(Asn) or Glu-tRNA(Gln) in organisms which lack either or both of asparaginyl-tRNA or glutaminyl-tRNA synthetases. The reaction takes place in the presence of glutamine and ATP through an activated phospho-Asp-tRNA(Asn) or phospho-Glu-tRNA(Gln). This is Aspartyl/glutamyl-tRNA(Asn/Gln) amidotransferase subunit C from Saccharolobus islandicus (strain Y.N.15.51 / Yellowstone #2) (Sulfolobus islandicus).